The following is a 395-amino-acid chain: F-box/kelch-repeat protein SKIP25 (395 aa).

The interval M1–G29 is disordered. One can recognise an F-box domain in the interval A34–L79. Kelch repeat units lie at residues A81 to P129, L147 to G194, I196 to E245, A246 to E299, and I301 to T342.

Part of a SCF (ASK-cullin-F-box) protein ligase complex. Interacts with SKP1A/ASK1.

The protein localises to the nucleus. Its pathway is protein modification; protein ubiquitination. In terms of biological role, component of SCF(ASK-cullin-F-box) E3 ubiquitin ligase complexes, which may mediate the ubiquitination and subsequent proteasomal degradation of target proteins. This Arabidopsis thaliana (Mouse-ear cress) protein is F-box/kelch-repeat protein SKIP25 (SKIP25).